We begin with the raw amino-acid sequence, 250 residues long: Bcl-2-like protein 12 (250 aa).

The segment at 24–46 (GEAAGSPVPTPPRSPAQEEPTDF) is disordered. Ser29 bears the Phosphoserine mark. Thr33 carries the post-translational modification Phosphothreonine. Ser37 carries the post-translational modification Phosphoserine. The residue at position 60 (Arg60) is an Omega-N-methylarginine. A phosphoserine mark is found at Ser111, Ser158, Ser159, Ser161, and Ser189. The BH2 motif lies at 227–238 (WIQAHGGWEGIL).

This sequence belongs to the Bcl-2 family. In terms of tissue distribution, expressed mainly in breast, thymus, prostate, fetal liver, colon, placenta, pancreas, small intestine, spinal cord, kidney, and bone marrow and to a lesser extent in many other tissues. Isoform 2 is primarily expressed in skeletal muscle.

This is Bcl-2-like protein 12 from Homo sapiens (Human).